A 186-amino-acid chain; its full sequence is Alkyl hydroperoxide reductase AhpD (186 aa).

Catalysis depends on Cys132, which acts as the Proton donor. Cys132 and Cys135 are disulfide-bonded. The active-site Cysteine sulfenic acid (-SOH) intermediate is the Cys135.

This sequence belongs to the AhpD family.

It carries out the reaction N(6)-[(R)-dihydrolipoyl]-L-lysyl-[lipoyl-carrier protein] + a hydroperoxide = N(6)-[(R)-lipoyl]-L-lysyl-[lipoyl-carrier protein] + an alcohol + H2O. Functionally, antioxidant protein with alkyl hydroperoxidase activity. Required for the reduction of the AhpC active site cysteine residues and for the regeneration of the AhpC enzyme activity. The chain is Alkyl hydroperoxide reductase AhpD from Anaeromyxobacter sp. (strain K).